We begin with the raw amino-acid sequence, 355 residues long: MSDSKLADSLNCLSVSTPSTTANPGRQQLLRLAVSNQRQVNNVSLANGKENKRTSNSKFNSSLRKIEEPIAGVPSSAGPQWREFHIGMFEIGKPLGKGKFGRVYLAKEKKTGFIVALKTLHKSELVQSKIEKQVRREIEIQSNLRHKNILRLYGHFHDEKRIYLILEFAGRGELYQHLRRAKRFSEEVASKYIFQMANALSYLHKKHVIHRDIKPENILLGIDGEIKLSDFGWSVHAPSNRRTTLCGTLDYLPPEMVEGKEHTEKVDLWSLGVLTYEFLVGAPPFEDMSGHSATYKRIAKVDLKIPSFVPPDARDLISRLLQHNPEKRMSLEQVMRHPWIVKYKDSWTRKSSESS.

The region spanning 89 to 340 (FEIGKPLGKG…LEQVMRHPWI (252 aa)) is the Protein kinase domain. ATP is bound by residues 95 to 103 (LGKGKFGRV) and lysine 118. Catalysis depends on aspartate 212, which acts as the Proton acceptor.

This sequence belongs to the protein kinase superfamily. Ser/Thr protein kinase family. Aurora subfamily. In terms of assembly, component of the CPC complex at least composed of ark1, bir1 and pic1. Interacts with the mitotic checkpoint complex (MCC) subunit mad3.

The protein resides in the nucleus. It is found in the cytoplasm. Its subcellular location is the cytoskeleton. The protein localises to the spindle. The enzyme catalyses L-seryl-[protein] + ATP = O-phospho-L-seryl-[protein] + ADP + H(+). It catalyses the reaction L-threonyl-[protein] + ATP = O-phospho-L-threonyl-[protein] + ADP + H(+). In terms of biological role, component of the chromosomal passenger complex (CPC), a complex that acts as a key regulator of chromosome segregation and cytokinesis. Has a role in error-correction of aberrent kinetochore-microtubule attachments to ensure that sister kinetochores become bioriented and connect to opposite poles by promoting spindle assembly checkpoint signaling. Ark1 is also required for phosphorylation of histone H3 that accompanies chromosome condensation and condensin recruitment to mitotic chromatin. The protein is Aurora kinase (ark1) of Schizosaccharomyces pombe (strain 972 / ATCC 24843) (Fission yeast).